A 348-amino-acid chain; its full sequence is Dihydroorotate dehydrogenase (quinone) (348 aa).

Residues 65–69 (AGMDK) and Thr89 contribute to the FMN site. Residue Lys69 participates in substrate binding. 114–118 (NRMGF) provides a ligand contact to substrate. Residues Asn143 and Asn176 each coordinate FMN. A substrate-binding site is contributed by Asn176. The active-site Nucleophile is Ser179. Residue Asn181 coordinates substrate. FMN contacts are provided by Lys221 and Thr249. Residue 250–251 (NT) coordinates substrate. Residues Gly272, Gly301, and 322–323 (YT) contribute to the FMN site.

It belongs to the dihydroorotate dehydrogenase family. Type 2 subfamily. As to quaternary structure, monomer. Requires FMN as cofactor.

It localises to the cell membrane. It catalyses the reaction (S)-dihydroorotate + a quinone = orotate + a quinol. Its pathway is pyrimidine metabolism; UMP biosynthesis via de novo pathway; orotate from (S)-dihydroorotate (quinone route): step 1/1. Functionally, catalyzes the conversion of dihydroorotate to orotate with quinone as electron acceptor. This Akkermansia muciniphila (strain ATCC BAA-835 / DSM 22959 / JCM 33894 / BCRC 81048 / CCUG 64013 / CIP 107961 / Muc) protein is Dihydroorotate dehydrogenase (quinone).